A 1385-amino-acid chain; its full sequence is Serine-aspartate repeat-containing protein D (1385 aa).

An N-terminal signal peptide occupies residues 1–35; the sequence is MLNRENKTAITRKGMVSNRLNKFSIRKYTVGTASI. The YSIRK-G/S signaling motif motif lies at 23–34; sequence FSIRKYTVGTAS. The ligand binding A region stretch occupies residues 36–568; sequence LVGTTLIFGL…NNQSGGAGQE (533 aa). 2 disordered regions span residues 54–162 and 200–224; these read ESTN…DLLE and ETLV…KSTA. 2 stretches are compositionally biased toward polar residues: residues 62-71 and 94-109; these read EATTSASDNQ and EMVS…NGNK. A compositionally biased stretch (basic and acidic residues) spans 130–145; that stretch reads KSDEQASPKSTNEDLN. The segment covering 146 to 155 has biased composition (polar residues); the sequence is TKQTISNQEG. The segment covering 205 to 214 has biased composition (low complexity); the sequence is NNSNSNNENN. 5 CNA-B domains span residues 569–680, 681–791, 792–901, 902–1012, and 1013–1123; these read VYKI…IYKP, KYNL…YKTP, KYNL…FYKP, TYNL…YKTP, and KYSL…EEET. Disordered regions lie at residues 856–886, 972–992, and 1077–1361; these read FETP…TGVI, YTPT…GLTT, and FEKP…SNNA. Polar residues-rich tracts occupy residues 860 to 869 and 972 to 981; these read SGYTPTQVGS and YTPTSVTSGN. The segment covering 1081-1090 has biased composition (low complexity); that stretch reads TGLTQTGTNT. Acidic residues-rich tracts occupy residues 1091–1101 and 1118–1324; these read TEDDKDADGGE and YYEE…DSDS. The short motif at 1348–1352 is the LPXTG sorting signal element; it reads LPETG. Threonine 1351 is modified (pentaglycyl murein peptidoglycan amidated threonine). Positions 1352–1385 are cleaved as a propeptide — removed by sortase; the sequence is GNENSGSNNATLFGGLFAALGSLLLFGRRKKQNK.

It belongs to the serine-aspartate repeat-containing protein (SDr) family. Interacts with host DSG1; this interaction increases S.aureus adherence to keratinocytes.

It is found in the secreted. The protein localises to the cell wall. Its function is as follows. Cell surface-associated calcium-binding protein which plays an important role in adhesion and pathogenesis. Mediates interactions with components of the extracellular matrix such as host DSG1 to promote bacterial adhesion to host cells. Contributes to the resistance to killing by innate immune components such as neutrophils present in blood and thus attenuates bacterial clearance. This chain is Serine-aspartate repeat-containing protein D (sdrD), found in Staphylococcus aureus (strain Mu50 / ATCC 700699).